Here is a 289-residue protein sequence, read N- to C-terminus: Inorganic pyrophosphatase (289 aa).

Ser2 is modified (N-acetylserine). Lys57 carries the N6-acetyllysine modification. 3 residues coordinate Mg(2+): Asp116, Asp121, and Asp153. Position 228 is an N6-acetyllysine (Lys228). Phosphoserine is present on Ser250.

It belongs to the PPase family. In terms of assembly, homodimer. Requires Mg(2+) as cofactor.

The protein localises to the cytoplasm. The catalysed reaction is diphosphate + H2O = 2 phosphate + H(+). In Macaca fascicularis (Crab-eating macaque), this protein is Inorganic pyrophosphatase (PPA1).